The following is a 671-amino-acid chain: Solute carrier family 53 member 1 (671 aa).

Residues 1-193 form an important for promoting lysosomal/autophagosomal degradation of PXo bodies following inorganic phosphate (Pi) starvation region; that stretch reads MKFAEHLTAH…DIDRLIQETE (193 aa). Topologically, residues 1–228 are cytoplasmic; the sequence is MKFAEHLTAH…EQQSPWTTFK (228 aa). In terms of domain architecture, SPX spans 2 to 218; sequence KFAEHLTAHI…MKRLRVPPLG (217 aa). The segment at 152–159 is important for inositol polyphosphate binding; sequence KILKKHDK. The chain crosses the membrane as a helical span at residues 229–253; that stretch reads VGLFSGAFVVLFITVVIAAMFYGFG. The Extracellular portion of the chain corresponds to 254 to 255; sequence EN. The helical transmembrane segment at 256-287 threads the bilayer; it reads WRAGMRMFRAPFLIIECLFLWGVNVYGWRSSG. The Cytoplasmic portion of the chain corresponds to 288–300; it reads VNHVLIFELDPRN. Residues 301-328 traverse the membrane as a helical segment; it reads HLSEQNIMEVASVFGVIWACCVLSYIFC. At 329 to 334 the chain is on the extracellular side; that stretch reads DPLGIP. The chain crosses the membrane as a helical span at residues 335-356; the sequence is QYAAPLCLYTLMAAFLLNPTKT. The helical intramembrane region spans 357–374; it reads FHHEARFWAIRILIRVIM. Over 375–379 the chain is Cytoplasmic; it reads APFCF. Residues 380 to 413 form a discontinuously helical membrane-spanning segment; that stretch reads VNFADFWLADQLNSMVPAFLDIPFLICFFGRSPT. Residues aspartate 389 and asparagine 392 each contribute to the phosphate site. Residues 414 to 415 lie on the Extracellular side of the membrane; the sequence is WH. A discontinuously helical membrane pass occupies residues 416–455; sequence KAGKAASHCVEYVSLLHPIVAIMPAYFRFAQCIRRYRDTK. The EXS domain occupies 423 to 627; the sequence is HCVEYVSLLH…DCSDQTTILR (205 aa). Position 456 (glutamate 456) is a topological domain, cytoplasmic. A helical transmembrane segment spans residues 457–488; that stretch reads SFPHLVNAAKYATSFFVVIFAHKYHTTTDTYP. Residues lysine 466 and tyrosine 467 each contribute to the phosphate site. At 489 to 491 the chain is on the extracellular side; that stretch reads LSK. A helical membrane pass occupies residues 492–519; the sequence is ENPWFYCWITAAIFSSCYAYTWDIKMDW. Over 520 to 538 the chain is Cytoplasmic; the sequence is GLFDSKAGDNRFLREEIVY. The chain crosses the membrane as a discontinuously helical span at residues 539-570; it reads SSTWFYYFGIIEDLILRFSWTLSMSLIEAGYI. Phosphate is bound by residues arginine 555, arginine 586, and arginine 587. Residues 571–609 form a helical membrane-spanning segment; it reads EGDVMMTILSPLEVFRRFIWNYFRLENEHLNNVGKFRAV. Topologically, residues 610–671 are cytoplasmic; the sequence is RDISVAPMDC…QGESIEDLCS (62 aa).

Belongs to the SYG1 (TC 2.A.94) family. As to quaternary structure, homodimer. Interacts with the FAR/SIN/STRIPAK complex members Cka and Pp2A-29B. Detected in PXo bodies found in the enterocytes and progenitors of the midgut and in the hindgut, but rarely occur in the Malpighian tubules, crop, brain, muscles and germlines (at protein level).

The protein localises to the membrane. The enzyme catalyses phosphate(in) = phosphate(out). Inorganic ion transporter that mediates phosphate ion export across the cell membrane. Plays a major role in phosphate homeostasis, preventing intracellular phosphate accumulation and possible calcium phosphate precipitation, ultimately preserving calcium signaling. Binds inositol hexakisphosphate (Ins6P) and similar inositol polyphosphates, such as 5-diphospho-inositol pentakisphosphate (5-InsP7), which are important intracellular signaling molecules involved in regulation of phosphate flux. In enterocytes and differentiating progenitors of the gut, promotes the biogenesis and maintenance of organelles called PXo bodies that store intracellular inorganic phosphate (Pi), and also regulates Cka-JNK mediated tissue homeostasis in response to Pi availability in these tissues. Under conditions of adequate Pi, transports Pi into PXo bodies which convert and store the Pi in the form of phospholipids. It also inhibits Cka at the post-transcriptional level to prevent Cka-bsk/JNK mediated cell proliferation. Upon Pi starvation, Pxo expression is down-regulated resulting in the PXo bodies decreasing in phospholipid content until they undergo lysosomal/autophagosomal degradation and release the stored Pi back into the cytosol for use by the cell. Decrease in Pxo expression also activates the Cka protein, which moves to the nucleus to activate bsk/JNK which then induces nearby progenitor cells to proliferate and form new absorptive cells, probably helping the organism to cope with the nutrient deficiency by maximizing absorption of dietary Pi. This is Solute carrier family 53 member 1 from Drosophila melanogaster (Fruit fly).